Consider the following 87-residue polypeptide: Transcriptional regulator PINT87aa (87 aa).

In terms of assembly, interacts with PAF1 complex member PAF1. Interacts with transcription factor FOXM1. In terms of tissue distribution, expressed in brain, liver, kidney and stomach with lower levels in breast, intestine, thyroid and pancreas.

It is found in the nucleus. Functionally, enhances the binding of the PAF1 complex to target gene promoters and plays a role in negative regulation of transcription. May function as an anchor to keep the PAF1 complex on target gene promoters, sequentially pausing RNA polymerase II-induced mRNA elongation. Inhibits FOXM1-mediated transcription of PHB2. The sequence is that of Transcriptional regulator PINT87aa from Homo sapiens (Human).